The primary structure comprises 385 residues: Cytochrome b (385 aa).

The next 4 membrane-spanning stretches (helical) occupy residues 32 to 52 (FGSL…TLAM), 76 to 98 (WLVR…LHIG), 113 to 133 (TWAI…LGYV), and 179 to 199 (FFAL…MHLI). Residues histidine 82 and histidine 96 each coordinate heme b. Heme b contacts are provided by histidine 183 and histidine 197. Residue histidine 202 participates in a ubiquinone binding. 4 consecutive transmembrane segments (helical) span residues 226–246 (FVFK…IFVF), 290–310 (LLGV…PITD), 322–342 (LSKV…QIGA), and 349–369 (FIEF…VIVP).

The protein belongs to the cytochrome b family. As to quaternary structure, fungal cytochrome b-c1 complex contains 10 subunits; 3 respiratory subunits, 2 core proteins and 5 low-molecular weight proteins. Cytochrome b-c1 complex is a homodimer. It depends on heme b as a cofactor.

It localises to the mitochondrion inner membrane. Component of the ubiquinol-cytochrome c reductase complex (complex III or cytochrome b-c1 complex) that is part of the mitochondrial respiratory chain. The b-c1 complex mediates electron transfer from ubiquinol to cytochrome c. Contributes to the generation of a proton gradient across the mitochondrial membrane that is then used for ATP synthesis. This is Cytochrome b (cob) from Aspergillus terreus (strain NIH 2624 / FGSC A1156).